Here is a 607-residue protein sequence, read N- to C-terminus: Pyruvate decarboxylase 2 (607 aa).

Positions 1–22 are disordered; the sequence is MDTKIGSIDACNPTNHDIGGPP. Residues aspartate 69 and histidine 156 each contribute to the substrate site. Residues 434–516 are thiamine pyrophosphate binding; that stretch reads DSWFNCQKLK…FLINNGGYTI (83 aa). 3 residues coordinate Mg(2+): aspartate 484, asparagine 511, and glycine 513. Residue glutamate 517 coordinates substrate.

It belongs to the TPP enzyme family. In terms of assembly, homotetramer. A metal cation is required as a cofactor. Requires thiamine diphosphate as cofactor. In terms of tissue distribution, expressed at low levels in roots, shoots, flowers, siliques and seeds.

The catalysed reaction is a 2-oxocarboxylate + H(+) = an aldehyde + CO2. The polypeptide is Pyruvate decarboxylase 2 (PDC2) (Arabidopsis thaliana (Mouse-ear cress)).